The sequence spans 999 residues: Probable metabotropic glutamate receptor mgl-1 (999 aa).

L-glutamate contacts are provided by residues Ser202, 223 to 225 (AST), Tyr273, Glu363, and Lys455. Asn518 carries an N-linked (GlcNAc...) asparagine glycan. 7 helical membrane-spanning segments follow: residues 682-704 (SLVPTILAVFGIIATLFVIVVYV), 719-739 (LSYILLISMIMCYCMTFVLLS), 751-769 (TGIGFAFSCLYSAMFVKTN), 792-812 (VVMTAMLAGVQLIGSLIWLSV), 836-857 (HHFLYSLAYDGFLIVLCTTYAV), 871-893 (FIGFSMYTTCVVWLSWIFFFFGT), and 904-929 (LCISISMSANVALACIFSPKLWIILF). A disordered region spans residues 975 to 999 (DSTRRRSSRKTSQPTSTSSAHDTFL). Positions 984-993 (KTSQPTSTSS) are enriched in low complexity.

The protein belongs to the G-protein coupled receptor 3 family.

The protein localises to the cell membrane. Functionally, G-protein coupled receptor for glutamate. Ligand binding causes a conformation change that triggers signaling via guanine nucleotide-binding proteins (G proteins) and modulates the activity of down-stream effectors. This Caenorhabditis elegans protein is Probable metabotropic glutamate receptor mgl-1 (mgl-1).